Reading from the N-terminus, the 68-residue chain is Protein transport protein Sec61 subunit gamma (68 aa).

Topologically, residues 1–32 (MDQVMQFVEPSRQFVKDSIRLVKRCTKPDRKE) are cytoplasmic. Residues 33-61 (FQKIAMATAIGFAIMGFIGFFVKLIHIPI) form a helical membrane-spanning segment. The Extracellular segment spans residues 62–68 (NNIIVGS).

It belongs to the SecE/SEC61-gamma family. The SEC61 channel-forming translocon complex consists of channel-forming core components SEC61A1, SEC61B and SEC61G and different auxiliary components such as SEC62 and SEC63. The SEC61 channel associates with the multi-pass translocon (MPT) complex.

It is found in the endoplasmic reticulum membrane. Component of SEC61 channel-forming translocon complex that mediates transport of signal peptide-containing precursor polypeptides across the endoplasmic reticulum (ER). Forms a ribosome receptor and a gated pore in the ER membrane, both functions required for cotranslational translocation of nascent polypeptides. The SEC61 channel is also involved in ER membrane insertion of transmembrane proteins: it mediates membrane insertion of the first few transmembrane segments of proteins, while insertion of subsequent transmembrane regions of multi-pass membrane proteins is mediated by the multi-pass translocon (MPT) complex. This Xenopus laevis (African clawed frog) protein is Protein transport protein Sec61 subunit gamma (sec61g).